The sequence spans 258 residues: Arylamine N-acetyltransferase 1 (258 aa).

Cys59 serves as the catalytic Acyl-thioester intermediate. Residue 97-98 participates in substrate binding; sequence IH. Catalysis depends on residues His98 and Asp113. Tyr199 and Thr205 together coordinate CoA.

It belongs to the arylamine N-acetyltransferase family.

The protein resides in the cytoplasm. It catalyses the reaction an arylamine + acetyl-CoA = an N-acetylarylamine + CoA. Its function is as follows. Participates in the detoxification of a plethora of hydrazine and arylamine drugs. This is Arylamine N-acetyltransferase 1 (NAT1) from Felis catus (Cat).